We begin with the raw amino-acid sequence, 89 residues long: Otospiralin (89 aa).

An N-terminal signal peptide occupies residues 1-21 (MQPCVLWWLALGLLLGIPAGA).

The protein belongs to the otospiralin family. Ear specific. Expressed in the cochlea and vestibule, but not in the cochlear nerve, cochlear nucleus, spinal chord, muscle, cerebral cortex, cerebellum, diencephalon and olfactory bulb. In the cochlea, expressed in fibrocytes of the spiral limbus, spiral ligament and suprastrial zone. In the vestibule, expressed in cells located to the stroma below the macular and crista sensory epithelia and in the subepithelial layer of the walls of semicircular canals and maculae.

It is found in the secreted. May be essential for the survival of the neurosensory epithelium of the inner ear. The polypeptide is Otospiralin (Otos) (Rattus norvegicus (Rat)).